We begin with the raw amino-acid sequence, 287 residues long: MKLKTGLNLTALLLFMISVAFPAQADTQKMYGIRGDNLSIATQMPAPRTYSVKGQTYTTKSGNEAKSYIKEGLASYYHLKFDGRKTASGDVYNSKQFTAAHKTLPINSYALVTNLHNNRKVIVRINDRGPFSDKRLIDLSHAAAKEIGLISRGIGQVRIEALHVAKNGNLSGAATKTLAKQAKTQEAADRLVLKSNTLFDNTSKSINALKGTEFYCLKMLELTSRSQANKLITQLALANIQTEVNRSGNKYEIYIGPFDDKTKMAQVRTKLQKMANNKPLIVYTYKN.

Positions 1–25 (MKLKTGLNLTALLLFMISVAFPAQA) are cleaved as a signal peptide. One can recognise an SPOR domain in the interval 209–284 (LKGTEFYCLK…ANNKPLIVYT (76 aa)).

This sequence belongs to the RlpA family.

In terms of biological role, lytic transglycosylase with a strong preference for naked glycan strands that lack stem peptides. The sequence is that of Endolytic peptidoglycan transglycosylase RlpA from Haemophilus influenzae (strain ATCC 51907 / DSM 11121 / KW20 / Rd).